The chain runs to 58 residues: UPF0509 protein YciZ (58 aa).

Belongs to the UPF0509 family.

The polypeptide is UPF0509 protein YciZ (Escherichia fergusonii (strain ATCC 35469 / DSM 13698 / CCUG 18766 / IAM 14443 / JCM 21226 / LMG 7866 / NBRC 102419 / NCTC 12128 / CDC 0568-73)).